Consider the following 199-residue polypeptide: Recombination protein RecR (199 aa).

The C4-type zinc-finger motif lies at 57–72 (CSVCGNLTDDDPCNIC). Residues 80–176 (STVLVVEDSK…TVTRLARGLA (97 aa)) enclose the Toprim domain.

Belongs to the RecR family.

In terms of biological role, may play a role in DNA repair. It seems to be involved in an RecBC-independent recombinational process of DNA repair. It may act with RecF and RecO. The protein is Recombination protein RecR of Streptococcus mutans serotype c (strain ATCC 700610 / UA159).